The following is a 706-amino-acid chain: Protein psiG (706 aa).

The N-terminal stretch at 1 to 23 (MKIILTLLIILFSLNKNLNFVSS) is a signal peptide. Residues 24–644 (EVTKSRICSI…FVCKPAAIIS (621 aa)) lie on the Extracellular side of the membrane. 8 N-linked (GlcNAc...) asparagine glycosylation sites follow: Asn95, Asn107, Asn212, Asn296, Asn429, Asn521, Asn532, and Asn616. Residues 109–253 (TLDKSSNIYS…SDYCGVCQGD (145 aa)) form the PA14 domain. A helical membrane pass occupies residues 645 to 665 (TSVIVGVSVAAAVVAIAIVVA). The Cytoplasmic segment spans residues 666 to 706 (SKKGYDAWAASNNNSLASLTSNPLYENPTGNGDNPMYQPNS). The tract at residues 687–706 (NPLYENPTGNGDNPMYQPNS) is disordered. Polar residues predominate over residues 693–706 (PTGNGDNPMYQPNS).

Belongs to the prespore-cell-inducing factor family.

The protein localises to the membrane. The sequence is that of Protein psiG (psiG-1) from Dictyostelium discoideum (Social amoeba).